We begin with the raw amino-acid sequence, 491 residues long: AP-2 complex subunit mu (491 aa).

Residues S179, S180, and S181 each carry the phosphoserine modification. Residues 209-490 (KDEVFLYVNE…ISKAGSYEVR (282 aa)) form the MHD domain.

It belongs to the adaptor complexes medium subunit family. In terms of assembly, adaptor protein complex 2 (AP-2) is a heterotetramer composed of two large adaptins (alpha-type subunit APL3 and beta-type subunit APL1), a medium chain (mu-type subunit APM4) and a small adaptin (sigma-type subunit APS2).

The protein resides in the membrane. It is found in the clathrin-coated pit. The protein localises to the cytoplasmic vesicle. Its subcellular location is the clathrin-coated vesicle membrane. Its function is as follows. Component of the adaptor complexes which link clathrin to receptors in coated vesicles. Clathrin-associated protein complexes are believed to interact with the cytoplasmic tails of membrane proteins, leading to their selection and concentration. The protein is AP-2 complex subunit mu (APM4) of Saccharomyces cerevisiae (strain ATCC 204508 / S288c) (Baker's yeast).